The following is a 267-amino-acid chain: Geranylgeranylglyceryl phosphate synthase (267 aa).

Mg(2+) is bound by residues Asp-23 and Ser-52. Sn-glycerol 1-phosphate is bound by residues 173-179 (YLEAGSG), 205-206 (GG), and 227-228 (GT).

The protein belongs to the GGGP/HepGP synthase family. Group II subfamily. It depends on Mg(2+) as a cofactor.

It is found in the cytoplasm. The catalysed reaction is sn-glycerol 1-phosphate + (2E,6E,10E)-geranylgeranyl diphosphate = sn-3-O-(geranylgeranyl)glycerol 1-phosphate + diphosphate. It participates in membrane lipid metabolism; glycerophospholipid metabolism. Prenyltransferase that catalyzes the transfer of the geranylgeranyl moiety of geranylgeranyl diphosphate (GGPP) to the C3 hydroxyl of sn-glycerol-1-phosphate (G1P). This reaction is the first ether-bond-formation step in the biosynthesis of archaeal membrane lipids. The chain is Geranylgeranylglyceryl phosphate synthase from Caldivirga maquilingensis (strain ATCC 700844 / DSM 13496 / JCM 10307 / IC-167).